The primary structure comprises 175 residues: 6,7-dimethyl-8-ribityllumazine synthase (175 aa).

Residues Phe-24, 58–60 (ALE), and 82–84 (AVI) each bind 5-amino-6-(D-ribitylamino)uracil. (2S)-2-hydroxy-3-oxobutyl phosphate is bound at residue 87-88 (ET). His-90 functions as the Proton donor in the catalytic mechanism. Asn-115 is a binding site for 5-amino-6-(D-ribitylamino)uracil. Arg-129 is a binding site for (2S)-2-hydroxy-3-oxobutyl phosphate. Residues 151 to 175 (LEPEEDDEDEDEEDEDFDDEETDRR) form a disordered region. Residues 152-175 (EPEEDDEDEDEEDEDFDDEETDRR) are compositionally biased toward acidic residues.

Belongs to the DMRL synthase family.

The catalysed reaction is (2S)-2-hydroxy-3-oxobutyl phosphate + 5-amino-6-(D-ribitylamino)uracil = 6,7-dimethyl-8-(1-D-ribityl)lumazine + phosphate + 2 H2O + H(+). Its pathway is cofactor biosynthesis; riboflavin biosynthesis; riboflavin from 2-hydroxy-3-oxobutyl phosphate and 5-amino-6-(D-ribitylamino)uracil: step 1/2. Functionally, catalyzes the formation of 6,7-dimethyl-8-ribityllumazine by condensation of 5-amino-6-(D-ribitylamino)uracil with 3,4-dihydroxy-2-butanone 4-phosphate. This is the penultimate step in the biosynthesis of riboflavin. The polypeptide is 6,7-dimethyl-8-ribityllumazine synthase (Bordetella petrii (strain ATCC BAA-461 / DSM 12804 / CCUG 43448)).